We begin with the raw amino-acid sequence, 291 residues long: Bifunctional protein FolD (291 aa).

NADP(+) contacts are provided by residues 173–175 (GRS) and Ser-198.

Belongs to the tetrahydrofolate dehydrogenase/cyclohydrolase family. In terms of assembly, homodimer.

The enzyme catalyses (6R)-5,10-methylene-5,6,7,8-tetrahydrofolate + NADP(+) = (6R)-5,10-methenyltetrahydrofolate + NADPH. The catalysed reaction is (6R)-5,10-methenyltetrahydrofolate + H2O = (6R)-10-formyltetrahydrofolate + H(+). Its pathway is one-carbon metabolism; tetrahydrofolate interconversion. Its function is as follows. Catalyzes the oxidation of 5,10-methylenetetrahydrofolate to 5,10-methenyltetrahydrofolate and then the hydrolysis of 5,10-methenyltetrahydrofolate to 10-formyltetrahydrofolate. The polypeptide is Bifunctional protein FolD (Psychrobacter sp. (strain PRwf-1)).